The chain runs to 62 residues: Short neurotoxin A (62 aa).

Residues 1 to 16 (RRCFNHPSSQPQTNKS) are compositionally biased toward polar residues. The segment at 1-21 (RRCFNHPSSQPQTNKSCPPGE) is disordered. Cystine bridges form between Cys3/Cys24, Cys17/Cys41, Cys43/Cys54, and Cys55/Cys60.

This sequence belongs to the three-finger toxin family. Short-chain subfamily. Type I alpha-neurotoxin sub-subfamily. In terms of tissue distribution, expressed by the venom gland.

It localises to the secreted. In terms of biological role, binds to muscle nicotinic acetylcholine receptor (nAChR) and inhibit acetylcholine from binding to the receptor, thereby impairing neuromuscular transmission. In Laticauda crockeri (Crocker's sea snake), this protein is Short neurotoxin A.